We begin with the raw amino-acid sequence, 689 residues long: Acyl-coenzyme A oxidase 1 (689 aa).

Threonine 149 and glycine 188 together coordinate FAD. Residue glutamate 444 is the Proton acceptor of the active site.

This sequence belongs to the acyl-CoA oxidase family. Heteropentamer composed of five different subunits. Requires FAD as cofactor.

It localises to the peroxisome. The enzyme catalyses a 2,3-saturated acyl-CoA + O2 = a (2E)-enoyl-CoA + H2O2. Its pathway is lipid metabolism; peroxisomal fatty acid beta-oxidation. The polypeptide is Acyl-coenzyme A oxidase 1 (POX1) (Yarrowia lipolytica (strain CLIB 122 / E 150) (Yeast)).